The chain runs to 166 residues: Peptide deformylase (166 aa).

Fe cation is bound by residues Cys88 and His130. Residue Glu131 is part of the active site. A Fe cation-binding site is contributed by His134.

The protein belongs to the polypeptide deformylase family. It depends on Fe(2+) as a cofactor.

The catalysed reaction is N-terminal N-formyl-L-methionyl-[peptide] + H2O = N-terminal L-methionyl-[peptide] + formate. Its function is as follows. Removes the formyl group from the N-terminal Met of newly synthesized proteins. Requires at least a dipeptide for an efficient rate of reaction. N-terminal L-methionine is a prerequisite for activity but the enzyme has broad specificity at other positions. This Caldicellulosiruptor bescii (strain ATCC BAA-1888 / DSM 6725 / KCTC 15123 / Z-1320) (Anaerocellum thermophilum) protein is Peptide deformylase.